The sequence spans 129 residues: Small ribosomal subunit protein eS6 (129 aa).

Belongs to the eukaryotic ribosomal protein eS6 family.

This Archaeoglobus fulgidus (strain ATCC 49558 / DSM 4304 / JCM 9628 / NBRC 100126 / VC-16) protein is Small ribosomal subunit protein eS6.